The chain runs to 153 residues: UPF0756 membrane protein LCABL_15860 (153 aa).

4 helical membrane-spanning segments follow: residues 4 to 24, 52 to 72, 85 to 105, and 115 to 135; these read WLFL…SLII, WGVT…EIGF, WIAI…VGLL, and LVFG…GPVI.

It belongs to the UPF0756 family.

It is found in the cell membrane. The chain is UPF0756 membrane protein LCABL_15860 from Lacticaseibacillus casei (strain BL23) (Lactobacillus casei).